The primary structure comprises 303 residues: UDP-3-O-acyl-N-acetylglucosamine deacetylase (303 aa).

Residues His-79, His-238, and Asp-242 each coordinate Zn(2+). Residue His-265 is the Proton donor of the active site.

This sequence belongs to the LpxC family. Zn(2+) is required as a cofactor.

It catalyses the reaction a UDP-3-O-[(3R)-3-hydroxyacyl]-N-acetyl-alpha-D-glucosamine + H2O = a UDP-3-O-[(3R)-3-hydroxyacyl]-alpha-D-glucosamine + acetate. The protein operates within glycolipid biosynthesis; lipid IV(A) biosynthesis; lipid IV(A) from (3R)-3-hydroxytetradecanoyl-[acyl-carrier-protein] and UDP-N-acetyl-alpha-D-glucosamine: step 2/6. In terms of biological role, catalyzes the hydrolysis of UDP-3-O-myristoyl-N-acetylglucosamine to form UDP-3-O-myristoylglucosamine and acetate, the committed step in lipid A biosynthesis. This Pseudoalteromonas translucida (strain TAC 125) protein is UDP-3-O-acyl-N-acetylglucosamine deacetylase.